The following is a 494-amino-acid chain: Cobyric acid synthase (494 aa).

The GATase cobBQ-type domain occupies 249–443 (EINVTILRLP…LHGIFDNGAW (195 aa)). The Nucleophile role is filled by cysteine 330. Histidine 435 is a catalytic residue.

This sequence belongs to the CobB/CobQ family. CobQ subfamily.

The protein operates within cofactor biosynthesis; adenosylcobalamin biosynthesis. Functionally, catalyzes amidations at positions B, D, E, and G on adenosylcobyrinic A,C-diamide. NH(2) groups are provided by glutamine, and one molecule of ATP is hydrogenolyzed for each amidation. The sequence is that of Cobyric acid synthase from Crocosphaera subtropica (strain ATCC 51142 / BH68) (Cyanothece sp. (strain ATCC 51142)).